Reading from the N-terminus, the 81-residue chain is YcgL domain-containing protein Tgr7_3126 (81 aa).

Residues 1 to 81 enclose the YcgL domain; the sequence is MQVYVYKSRR…QMPPQNERPL (81 aa).

The sequence is that of YcgL domain-containing protein Tgr7_3126 from Thioalkalivibrio sulfidiphilus (strain HL-EbGR7).